The primary structure comprises 248 residues: Triosephosphate isomerase (248 aa).

9–11 (NWK) is a binding site for substrate. The active-site Electrophile is H93. E163 functions as the Proton acceptor in the catalytic mechanism. Substrate contacts are provided by residues G169, S208, and 229-230 (GG).

It belongs to the triosephosphate isomerase family. As to quaternary structure, homodimer.

It localises to the cytoplasm. It carries out the reaction D-glyceraldehyde 3-phosphate = dihydroxyacetone phosphate. The protein operates within carbohydrate biosynthesis; gluconeogenesis. Its pathway is carbohydrate degradation; glycolysis; D-glyceraldehyde 3-phosphate from glycerone phosphate: step 1/1. Its function is as follows. Involved in the gluconeogenesis. Catalyzes stereospecifically the conversion of dihydroxyacetone phosphate (DHAP) to D-glyceraldehyde-3-phosphate (G3P). The chain is Triosephosphate isomerase from Jannaschia sp. (strain CCS1).